Reading from the N-terminus, the 224-residue chain is Peroxiredoxin-6 (224 aa).

The Thioredoxin domain occupies 5–169 (LLLGDEAPNF…ILRVVDSLQL (165 aa)). The tract at residues 31–40 (DSWGILFSHP) is required and sufficient for targeting to lysosomes and lamellar bodies. Position 44 is a phosphothreonine (T44). The Cysteine sulfenic acid (-SOH) intermediate; for peroxidase activity role is filled by C47. K63 bears the N6-acetyllysine mark. The residue at position 89 (Y89) is a Phosphotyrosine. T93 carries the phosphothreonine modification. The active-site For phospholipase activity is the D140. T177 is modified (phosphothreonine; by MAPK). K209 is subject to N6-acetyllysine; alternate. The residue at position 209 (K209) is an N6-succinyllysine; alternate.

This sequence belongs to the peroxiredoxin family. Prx6 subfamily. As to quaternary structure, homodimer. Interacts with GSTP1; mediates PRDX6 glutathionylation and regeneration. Interacts with APEX1. Interacts with STH. May interact with FAM168B. May interact with HTR2A. Irreversibly inactivated by overoxidation of Cys-47 to sulfinic acid (Cys-SO(2)H) and sulfonic acid (Cys-SO(3)H) forms upon oxidative stress. In terms of processing, phosphorylation at Thr-177 by MAP kinases increases the phospholipase activity of the enzyme. The phosphorylated form exhibits a greater lysophosphatidylcholine acyltransferase activity compared to the non-phosphorylated form. In terms of tissue distribution, highly expressed in heart, kidney and liver. Moderate expression in brain and stomach. Very low levels in intestine.

It localises to the cytoplasm. The protein resides in the lysosome. It catalyses the reaction a hydroperoxide + 2 glutathione = an alcohol + glutathione disulfide + H2O. The catalysed reaction is a 1,2-diacyl-sn-glycero-3-phosphocholine + H2O = a 1-acyl-sn-glycero-3-phosphocholine + a fatty acid + H(+). It carries out the reaction a 1-acyl-sn-glycero-3-phosphocholine + an acyl-CoA = a 1,2-diacyl-sn-glycero-3-phosphocholine + CoA. The enzyme catalyses 1-hexadecanoyl-sn-glycero-3-phosphocholine + hexadecanoyl-CoA = 1,2-dihexadecanoyl-sn-glycero-3-phosphocholine + CoA. It catalyses the reaction 1,2-dihexadecanoyl-sn-glycero-3-phosphocholine + H2O = 1-hexadecanoyl-sn-glycero-3-phosphocholine + hexadecanoate + H(+). Its activity is regulated as follows. MJ33 or lithium;[(2R)-1-hexadecoxy-3-(2,2,2-trifluoroethoxy)propan-2-yl] methyl phosphate inhibits its phospholipase A2 activity. CI-976 or 2,2-Dimethyl-N-(2,4,6-trimethoxyphenyl)dodecanamide inhibits its lysophosphatidylcholine acyltransferase activity. Its function is as follows. Thiol-specific peroxidase that catalyzes the reduction of hydrogen peroxide and organic hydroperoxides to water and alcohols, respectively. Can reduce H(2)O(2) and short chain organic, fatty acid, and phospholipid hydroperoxides. Has phospholipase activity. Can either reduce the oxidized sn-2 fatty acyl group of phospholipids (peroxidase activity) or hydrolyze the sn-2 ester bond of phospholipids (phospholipase activity). These activities are dependent on binding to phospholipids at acidic pH and to oxidized phospholipds at cytosolic pH. Plays a role in cell protection against oxidative stress by detoxifying peroxides and in phospholipid homeostasis. Exhibits acyl-CoA-dependent lysophospholipid acyltransferase which mediates the conversion of lysophosphatidylcholine (1-acyl-sn-glycero-3-phosphocholine or LPC) into phosphatidylcholine (1,2-diacyl-sn-glycero-3-phosphocholine or PC). Shows a clear preference for LPC as the lysophospholipid and for palmitoyl CoA as the fatty acyl substrate. The protein is Peroxiredoxin-6 (Prdx6) of Mus musculus (Mouse).